We begin with the raw amino-acid sequence, 128 residues long: Azurin (128 aa).

A Plastocyanin-like domain is found at 1 to 128; the sequence is AECKVTVDST…AMMKGTVTLK (128 aa). Cys-3 and Cys-26 are disulfide-bonded. Residues His-46, Cys-112, His-117, and Met-121 each contribute to the Cu cation site.

It localises to the periplasm. Transfers electrons from cytochrome c551 to cytochrome oxidase. This Pseudomonas fluorescens biotype C protein is Azurin.